The sequence spans 238 residues: Large ribosomal subunit protein bL25 (238 aa).

The segment covering 1 to 10 (MATTVKELKA) has biased composition (basic and acidic residues). Residues 1 to 24 (MATTVKELKATARPKSGKGAARAE) form a disordered region.

The protein belongs to the bacterial ribosomal protein bL25 family. CTC subfamily. As to quaternary structure, part of the 50S ribosomal subunit; part of the 5S rRNA/L5/L18/L25 subcomplex. Contacts the 5S rRNA. Binds to the 5S rRNA independently of L5 and L18.

In terms of biological role, this is one of the proteins that binds to the 5S RNA in the ribosome where it forms part of the central protuberance. The polypeptide is Large ribosomal subunit protein bL25 (Bradyrhizobium diazoefficiens (strain JCM 10833 / BCRC 13528 / IAM 13628 / NBRC 14792 / USDA 110)).